Consider the following 762-residue polypeptide: 5-methyltetrahydropteroyltriglutamate--homocysteine methyltransferase (762 aa).

5-methyltetrahydropteroyltri-L-glutamate is bound by residues 17-20 (REWK) and K111. L-homocysteine is bound by residues 435-437 (IGS) and E488. L-methionine is bound by residues 435–437 (IGS) and E488. 5-methyltetrahydropteroyltri-L-glutamate is bound by residues 519-520 (RC) and W565. An L-homocysteine-binding site is contributed by D603. D603 provides a ligand contact to L-methionine. E609 contributes to the 5-methyltetrahydropteroyltri-L-glutamate binding site. Positions 645, 647, and 669 each coordinate Zn(2+). Catalysis depends on H698, which acts as the Proton donor. C730 contacts Zn(2+).

Belongs to the vitamin-B12 independent methionine synthase family. The cofactor is Zn(2+).

The catalysed reaction is 5-methyltetrahydropteroyltri-L-glutamate + L-homocysteine = tetrahydropteroyltri-L-glutamate + L-methionine. It functions in the pathway amino-acid biosynthesis; L-methionine biosynthesis via de novo pathway; L-methionine from L-homocysteine (MetE route): step 1/1. Functionally, catalyzes the transfer of a methyl group from 5-methyltetrahydrofolate to homocysteine resulting in methionine formation. The sequence is that of 5-methyltetrahydropteroyltriglutamate--homocysteine methyltransferase from Bacillus cytotoxicus (strain DSM 22905 / CIP 110041 / 391-98 / NVH 391-98).